The following is a 161-amino-acid chain: Large-conductance mechanosensitive channel (161 aa).

2 consecutive transmembrane segments (helical) span residues 21–41 (VGVIIGAAFNGIVKSLVDGVI) and 79–99 (GAFINTVIQFLIVAVVVFLLV). Over residues 142 to 154 (TAAPKAAAAPVAK) the composition is skewed to low complexity. A disordered region spans residues 142-161 (TAAPKAAAAPVAKPKTKPKA).

This sequence belongs to the MscL family. In terms of assembly, homopentamer.

Its subcellular location is the cell inner membrane. Its function is as follows. Channel that opens in response to stretch forces in the membrane lipid bilayer. May participate in the regulation of osmotic pressure changes within the cell. This is Large-conductance mechanosensitive channel from Caulobacter sp. (strain K31).